A 921-amino-acid chain; its full sequence is Inter-alpha-trypsin inhibitor heavy chain H4 (921 aa).

An N-terminal signal peptide occupies residues 1–27; sequence MKTLSPTGYGLLLVLPLLLAVLQSTTA. The region spanning 28-146 is the VIT domain; it reads HKNDINIYSL…KVTFELVYEE (119 aa). 3 N-linked (GlcNAc...) asparagine glycosylation sites follow: Asn-80, Asn-205, and Asn-242. In terms of domain architecture, VWFA spans 270 to 428; sequence PKNVIFVIDT…YAFLEKMALE (159 aa). 2 N-linked (GlcNAc...) asparagine glycosylation sites follow: Asn-513 and Asn-577. A disordered region spans residues 591-646; it reads KPEGQEQSQVAEKPVENGNRQGNTHSGHSSFQFHSVGDRTSRLTGGSSVDPVFSHR. Positions 608 to 623 are enriched in polar residues; that stretch reads GNRQGNTHSGHSSFQF. Thr-712 is a glycosylation site (O-linked (GalNAc...) threonine). Cys-738 and Cys-916 are joined by a disulfide.

It belongs to the ITIH family. Interacts (via C-terminus) with DNAJC1 (via SANT 2 domain). Appears to be both N- and O-glycosylated. In terms of processing, cleaved by plasma kallikrein to yield 55- and 25-kDa fragments. Liver specific.

The protein localises to the secreted. Its function is as follows. Type II acute-phase protein (APP) involved in inflammatory responses to trauma. May also play a role in liver development or regeneration. The protein is Inter-alpha-trypsin inhibitor heavy chain H4 (ITIH4) of Sus scrofa (Pig).